The following is a 520-amino-acid chain: 2-isopropylmalate synthase (520 aa).

Positions 4-266 (VEFLDTTLRD…TSDIVLNETV (263 aa)) constitute a Pyruvate carboxyltransferase domain. Mn(2+) is bound by residues D13, H201, H203, and N237. A regulatory domain region spans residues 390-520 (HFGDLKLTSN…AVSFRDVPTN (131 aa)).

It belongs to the alpha-IPM synthase/homocitrate synthase family. LeuA type 1 subfamily. As to quaternary structure, homodimer. The cofactor is Mn(2+).

The protein resides in the cytoplasm. The enzyme catalyses 3-methyl-2-oxobutanoate + acetyl-CoA + H2O = (2S)-2-isopropylmalate + CoA + H(+). Its pathway is amino-acid biosynthesis; L-leucine biosynthesis; L-leucine from 3-methyl-2-oxobutanoate: step 1/4. In terms of biological role, catalyzes the condensation of the acetyl group of acetyl-CoA with 3-methyl-2-oxobutanoate (2-ketoisovalerate) to form 3-carboxy-3-hydroxy-4-methylpentanoate (2-isopropylmalate). The polypeptide is 2-isopropylmalate synthase (Streptococcus gallolyticus (strain UCN34)).